The following is a 139-amino-acid chain: Aspartate 1-decarboxylase (139 aa).

The active-site Schiff-base intermediate with substrate; via pyruvic acid is the Ser-25. Ser-25 bears the Pyruvic acid (Ser) mark. Thr-57 contacts substrate. The active-site Proton donor is the Tyr-58. Substrate is bound at residue Gly-73–Ala-75. The tract at residues Thr-117–Arg-139 is disordered.

The protein belongs to the PanD family. In terms of assembly, heterooctamer of four alpha and four beta subunits. Pyruvate is required as a cofactor. In terms of processing, is synthesized initially as an inactive proenzyme, which is activated by self-cleavage at a specific serine bond to produce a beta-subunit with a hydroxyl group at its C-terminus and an alpha-subunit with a pyruvoyl group at its N-terminus.

The protein localises to the cytoplasm. It carries out the reaction L-aspartate + H(+) = beta-alanine + CO2. The protein operates within cofactor biosynthesis; (R)-pantothenate biosynthesis; beta-alanine from L-aspartate: step 1/1. Catalyzes the pyruvoyl-dependent decarboxylation of aspartate to produce beta-alanine. This Nocardioides sp. (strain ATCC BAA-499 / JS614) protein is Aspartate 1-decarboxylase.